The primary structure comprises 422 residues: UDP-N-acetylglucosamine 1-carboxyvinyltransferase (422 aa).

Lys22–Asn23 lines the phosphoenolpyruvate pocket. Arg94 serves as a coordination point for UDP-N-acetyl-alpha-D-glucosamine. Cys118 (proton donor) is an active-site residue. Cys118 is subject to 2-(S-cysteinyl)pyruvic acid O-phosphothioketal. Residues Arg123–Leu127, Asp309, and Ile331 each bind UDP-N-acetyl-alpha-D-glucosamine.

Belongs to the EPSP synthase family. MurA subfamily.

The protein localises to the cytoplasm. It catalyses the reaction phosphoenolpyruvate + UDP-N-acetyl-alpha-D-glucosamine = UDP-N-acetyl-3-O-(1-carboxyvinyl)-alpha-D-glucosamine + phosphate. The protein operates within cell wall biogenesis; peptidoglycan biosynthesis. Cell wall formation. Adds enolpyruvyl to UDP-N-acetylglucosamine. This chain is UDP-N-acetylglucosamine 1-carboxyvinyltransferase, found in Cereibacter sphaeroides (strain ATCC 17029 / ATH 2.4.9) (Rhodobacter sphaeroides).